Here is a 351-residue protein sequence, read N- to C-terminus: Probable cell division control protein 7 homolog 2 (351 aa).

In terms of domain architecture, Protein kinase spans 21 to 341; the sequence is YTPIEKIGEG…ASDALSHPFF (321 aa). Residues 27 to 35 and lysine 50 contribute to the ATP site; that span reads IGEGSFSVV. Aspartate 137 acts as the Proton acceptor in catalysis.

The protein belongs to the protein kinase superfamily. Ser/Thr protein kinase family. CDC7 subfamily. It depends on Mg(2+) as a cofactor.

The enzyme catalyses L-seryl-[protein] + ATP = O-phospho-L-seryl-[protein] + ADP + H(+). The catalysed reaction is L-threonyl-[protein] + ATP = O-phospho-L-threonyl-[protein] + ADP + H(+). Serine/threonine-protein kinase. Needed for the initiation of DNA synthesis during mitosis as well as for synaptonemal complex formation and commitment to recombination during meiosis. The protein is Probable cell division control protein 7 homolog 2 (CDC7-2) of Encephalitozoon cuniculi (strain GB-M1) (Microsporidian parasite).